The sequence spans 79 residues: Neurotoxin ShK-like1 (79 aa).

The signal sequence occupies residues 1 to 25 (MSRKLLAVLMVCTFFLIAASMGTNA). Residues 26-35 (LPFHEGIERR) constitute a propeptide that is removed on maturation. Positions 39–78 (CVDKMPFVCMRKDIPAICKNRNHRSYAFIMDVCRKTCGQC) constitute a ShKT domain. 3 disulfide bridges follow: cysteine 39–cysteine 78, cysteine 47–cysteine 71, and cysteine 56–cysteine 75.

Expressed in nematocytes (in planulae and primary polyps). Is localized predominantly in the body column nematocytes and not in the tentacles (in primary polyps).

It is found in the nematocyst. The protein resides in the secreted. Functionally, neurotoxin. In vivo, induces contraction paralysis followed by death (within 2 hours) on zebrafish larvae. Also induces body contraction in Nematostella 11-dpf polyps. The chain is Neurotoxin ShK-like1 from Nematostella vectensis (Starlet sea anemone).